The chain runs to 480 residues: Ribosomal RNA small subunit methyltransferase F (480 aa).

S-adenosyl-L-methionine contacts are provided by residues 125 to 131 (AAAPGSK), E149, D176, and D194. C247 (nucleophile) is an active-site residue.

It belongs to the class I-like SAM-binding methyltransferase superfamily. RsmB/NOP family.

The protein resides in the cytoplasm. It catalyses the reaction cytidine(1407) in 16S rRNA + S-adenosyl-L-methionine = 5-methylcytidine(1407) in 16S rRNA + S-adenosyl-L-homocysteine + H(+). In terms of biological role, specifically methylates the cytosine at position 1407 (m5C1407) of 16S rRNA. The polypeptide is Ribosomal RNA small subunit methyltransferase F (Enterobacter sp. (strain 638)).